Consider the following 2513-residue polypeptide: MDSVYVDIDADSAFLKALQRAYPMFEVEPKQVTPNDHANARAFSHLAIKLIEQEIDPGSTILGIGSAPARRMMSDRKYHCVCPMRSAEDPERLANYARKLASAAGKVTDKNISGKINDLQAVMAVPNMETSTFCLHTDATCKQRGDVAIYQDVYAVHAPTSLYHQAIKGVHVAYWIGFDTTPFMYNAMAGAYPSYSTNWADEQVLKAKNIGLCSTDLSEGRRGKLSIMRGKKFKPCDRVLFSVGSTLYPESRKLLQSWHLPSVFHLKGKLSFTCRCDTIVSCEGYVVKRVTMSPGIYGKTSGYAVTHHADGFLMCKTTDTVDGERVSFSVCTYVPATICDQMTGILATEVTPEDAQKLLVGLNQRIVVNGRTQRNTNTMKNYLLPIVAQAFSKWAKECRKDMEDEKLLGVRERTLTCCCLWAFRKHKTHTVYKRPDTQSIQKVPAEFDSFVIPSLWSSGLSIPLRTRIKWLLSKAPKHEQLPHSGNAEEAAQAETDAVEEREAELTREAMPPLQATQDDVQVEIDVEQLEDRAGAGIVETPRGAIKVTAQPSDLVVGEYLVLTPQAVLRSQKLGLIHALAEQVKTCTHSGRAGRYAVEAYDGRVLVPSGYAIPQEDFQSLSESATMVFNEREFVNRKLHHIAMHGPALNTDEESYELVRVEKTEHEYVYDVDQKKCCKREEATGLVLVGDLTSPPYHEFAYEGLKIRPACPYKTAVIGVFGVPGSGKSAIIKNLVTRQDLVTSGKKENCQEISNDVMRQRKLEISARTVDSLLLNGCNKPVEVLYVDEAFACHSGTLLALIAMVRPRQKVVLCGDPKQCGFFNMMQMKVNYNHNICTQVYHKSISRRCTLPVTAIVSSLHYESKMRTTNEYNQPIVVDTTGTTKPEPGDLVLTCFRGWVKQLQIDYRGNEVMTAAASQGLTRKGVYAVRQKVNENPLYASTSEHVNVLLTRTEGKLIWKTLSGDPWIKILQNPPKGNFKATIKEWEAEHASIMAGICNYQMAFDTFQNKANVCWAKCLVPILDTAGIKLSDRQWSQIVQAFKEDRAYSPEVALNEICTRIYGVDLDSGLFSKPLISVYYADNHWDNRPGGKMFGFNPEVALMLEKKYPFTKGKWNINKQICITTRKVDEFNPETNIIPANRRLPHSLVAEHHSVRGERMEWLVNKINGHHMLLVSGYNLILPTKRVTWVAPLGTRGADYTYNLELGLPATLGRYDLVVINIHTPFRIHHYQQCVDHAMKLQMLGGDSLRLLKPGGSLLIRAYGYADRTSERVISVLGRKFRSSRALKPQCITSNTEMFFLFSRFDNGRRNFTTHVMNNQLNAVYAGLATRAGCAPSYRVKRMDIAKNTEECVVNAANPRGVPGDGVCKAVYRKWPESFRNSATPVGTAKTIMCGQYPVIHAVGPNFSNYSEAEGDRELASAYREVAKEVSRLGVSSVAIPLLSTGVYSGGKDRLLQSLNHLFAAMDSTDADVVIYCRDKEWEKKITEAISLRSQVELLDDHISVDCDIVRVHPDSSLAGRKGYSTVEGALYSYLEGTRFHQTAVDMAEIYTMWPKQTEANEQVCLYALGESIESVRQKCPVDDADASFPPKTVPCLCRYAMTPERVARLRMNHTTSIIVCSSFPLPKYKIEGVQKVKCSKALLFDHNVPSRVSPRTYRPADEIIQTPQISTEACQDAQLVQSINDEAVPVPSDLEACDATMDWPSIGTVPTRQRHDSFDSEYSSRSNIQLVTADVHAPMYANSLASSGGSMLSLSSEPAQNGIMILPDSEDTDSISRVSTPIAPPRRRLGRTINVTCDEREGKILPMASDRFFTAKPYTVALSVSTADITAYPIQAPLGLTQPPTLEQITFGDFAEGEIDNLLTGALTFGDFEPGEVEELTDSEWSTCSDTDEELRLDRAGGYIFSSDTGQGHLQQKSVRQTTLPVNIVEEVHEEKCYPPKLDETKEQLLLKRLQESASTANRSRYQSRKVENMKATIIHRLKEGCRLYLASDTPRVPSYRITYPAPVYSPSINIKLSNPETAVAVCNEFLARNYPTVASYQVTDEYDAYLDMVDGSESCLDRATFNPSKLRSYPKQHSYHAPTIRSAVPSPFQNTLQNVLAAATKRNCNVTQMRELPTMDSAVFNVECFKKYACNQEYWREFASSPIRVTTENLTMYVTKLKGPKAAALFAKTHNLLPLQEVPMDRFTMDMKRDVKVTPGTKHTEERPKVQVIQAAEPLATAYLCGIHRELVRRLNAVLLPNVHTLFDMSAEDFDAIIATHFKPGDAVLETDIASFDKSQDDSLALTAMMLLEDLGVDQPILDLIEAAFGEISSCHLPTGTRFKFGAMMKSGMFLTLFVNTLLNITIASRVLEERLTTSACAAFIGDDNIIHGVVSDALMAARCATWMNMEVKIIDAVVSEKAPYFCGGFILHDTVTGTSCRVADPLKRLFKLGKPLAAGDEQDEDRRRALADEVTRWQRTGLVTELEKAVYSRYEVQGITAVITSMATFASSKENFKKLRGPVVTLYGGPK.

The Alphavirus-like MT domain maps to 28–259 (EPKQVTPNDH…ESRKLLQSWH (232 aa)). Positions 244–263 (GSTLYPESRKLLQSWHLPSV) are nsP1 membrane-binding. S-palmitoyl cysteine; by host attachment occurs at residues C417 and C419. The 153-residue stretch at 690–842 (DLTSPPYHEF…HNICTQVYHK (153 aa)) folds into the (+)RNA virus helicase ATP-binding domain. 721-728 (GVPGSGKS) is an a ribonucleoside 5'-triphosphate binding site. Residues 843-991 (SISRRCTLPV…IKEWEAEHAS (149 aa)) form the (+)RNA virus helicase C-terminal domain. Residues 1004 to 1327 (DTFQNKANVC…NQLNAVYAGL (324 aa)) form the Peptidase C9 domain. The nucleolus localization signal stretch occupies residues 1005-1024 (TFQNKANVCWAKCLVPILDT). Residue C1013 is the For cysteine protease nsP2 activity of the active site. Residues 1058-1067 (TRIYGVDLDS) carry the Nuclear export signal motif. The active-site For cysteine protease nsP2 activity is the H1083. A Nuclear localization signal motif is present at residues 1182–1186 (PTKRV). The ADP-D-ribose site is built by D1343, N1357, G1365, G1445, V1446, and Y1447. Zn(2+) contacts are provided by C1595, C1597, C1620, and C1638. Short sequence motifs (FGDF; binding to host G3BP1) lie at residues 1851–1854 (FGDF) and 1869–1872 (FGDF). The 116-residue stretch at 2267 to 2382 (DAVLETDIAS…HGVVSDALMA (116 aa)) folds into the RdRp catalytic domain.

In terms of assembly, interacts with non-structural protein 3. Interacts with RNA-directed RNA polymerase nsP4. Interacts with protease nsP2. interacts with itself. As to quaternary structure, interacts with mRNA-capping enzyme nsP1. Interacts with host DDX1. Interacts with host DDX3. Interacts (via C-terminus) with host G3BP1; this interaction inhibits the formation of host stress granules on viral mRNAs and the nsp3-G3BP1 complexes bind viral RNAs and probably orchestrate the assembly of viral replication complexes. Interacts (via C-terminus) with host G3BP2; this interaction inhibits the formation of host stress granules on viral mRNAs and the nsp3-G3BP2 complexes bind viral RNAs and probably orchestrate the assembly of viral replication complexes. Interacts with mRNA-capping enzyme nsP1. Interacts with protease nsP2. interacts with itself. In terms of assembly, interacts with RNA-directed RNA polymerase nsP4. Interacts with mRNA-capping enzyme nsP1. Interacts with KPNA1/karyopherin-alpha1; this interaction probably allows the active transport of protease nsP2 into the host nucleus. It depends on Mg(2+) as a cofactor. The cofactor is Mn(2+). In terms of processing, specific enzymatic cleavages in vivo yield mature proteins. The processing of the polyprotein is temporally regulated. In early stages (1.7 hpi), P1234 is first cleaved in trans through its nsP2 protease activity, releasing P123 and nsP4, which associate to form the early replication complex. At the same time, P1234 is also cut at the nsP1/nsP2 site early in infection but with lower efficiency. After replication of the viral minus-strand RNAs (4 hpi), the polyproteins are cut at the nsP1/nsP2 and nsP2/nsP3 sites very efficiently, preventing accumulation of P123 and P1234 and allowing the formation of the late replication complex. NsP3/nsP4 site is not cleaved anymore and P34 is produced rather than nsP4. Specific enzymatic cleavages in vivo yield mature proteins. The processing of the polyprotein is temporally regulated. In early stages (1.7 hpi), P123 is cleaved at the nsP1/nsP2 site with low efficiency. After replication of the viral minus-strand RNAs (4 hpi), the polyproteins are cut at the nsP1/nsP2 and nsP2/nsP3 sites very efficiently, preventing accumulation of P123 and allowing the formation of the late replication complex. Post-translationally, palmitoylated by host palmitoyltransferases ZDHHC2 and ZDHHC19. In terms of processing, phosphorylated by host on serines and threonines. Ubiquitinated; targets the protein for rapid degradation via the ubiquitin system. Nsp4 is present in extremely low quantities due to low frequency of translation through the amber stop-codon and the degradation by the ubiquitin pathway.

The protein localises to the host cytoplasmic vesicle membrane. It localises to the host cell membrane. The protein resides in the host cell projection. It is found in the host filopodium. Its subcellular location is the host nucleus. The protein localises to the host cytoplasm. The enzyme catalyses GTP + S-adenosyl-L-methionine = N(7)-methyl-GTP + S-adenosyl-L-homocysteine. It catalyses the reaction N(7)-methyl-GTP + L-histidyl-[protein] = N(tele)-(N(7)-methylguanosine 5'-phospho)-L-histidyl-[protein] + diphosphate. It carries out the reaction N(tele)-(N(7)-methylguanosine 5'-phospho)-L-histidyl-[protein] + a 5'-end diphospho-(purine-ribonucleoside) in mRNA + H(+) = a 5'-end (N(7)-methyl 5'-triphosphoguanosine)-(purine-ribonucleoside) in mRNA + L-histidyl-[protein]. The catalysed reaction is a 5'-end triphospho-ribonucleoside in mRNA + H2O = a 5'-end diphospho-ribonucleoside in mRNA + phosphate + H(+). The enzyme catalyses a ribonucleoside 5'-triphosphate + H2O = a ribonucleoside 5'-diphosphate + phosphate + H(+). It catalyses the reaction ATP + H2O = ADP + phosphate + H(+). It carries out the reaction RNA(n) + a ribonucleoside 5'-triphosphate = RNA(n+1) + diphosphate. The catalysed reaction is 4-O-(ADP-D-ribosyl)-L-aspartyl-[protein] + H2O = L-aspartyl-[protein] + ADP-D-ribose + H(+). The enzyme catalyses 5-O-(ADP-D-ribosyl)-L-glutamyl-[protein] + H2O = L-glutamyl-[protein] + ADP-D-ribose + H(+). It catalyses the reaction RNA(n) + ATP = RNA(n)-3'-adenine ribonucleotide + diphosphate. It carries out the reaction ADP-alpha-D-ribose 1''-phosphate + H2O = ADP-D-ribose + phosphate. Functionally, inactive precursor of the viral replicase, which is activated by cleavages carried out by the viral protease nsP2. In terms of biological role, the early replication complex formed by the polyprotein P123 and nsP4 synthesizes minus-strand RNAs. As soon P123 is cleaved into mature proteins, the plus-strand RNAs synthesis begins. Cytoplasmic capping enzyme that catalyzes two virus-specific reactions: methyltransferase and nsP1 guanylyltransferase. mRNA-capping is necessary since all viral RNAs are synthesized in the cytoplasm, and host capping enzymes are restricted to the nucleus. The enzymatic reaction involves a covalent link between 7-methyl-GMP and nsP1, whereas eukaryotic capping enzymes form a covalent complex only with GMP. nsP1 capping consists in the following reactions: GTP is first methylated into 7-methyl-GMP and then is covalently linked to nsP1 to form the m7GMp-nsP1 complex from which 7-methyl-GMP complex is transferred to the mRNA to create the cap structure. NsP1 is also needed for the initiation of the minus-strand RNAs synthesis. Probably serves as a membrane anchor for the replication complex composed of nsP1-nsP4. Palmitoylated nsP1 is remodeling host cell cytoskeleton, and induces filopodium-like structure formation at the surface of the host cell. Its function is as follows. Multifunctional protein whose N-terminus is part of the RNA polymerase complex and displays NTPase, RNA triphosphatase and helicase activities. NTPase and RNA triphosphatase are involved in viral RNA capping and helicase keeps a check on the dsRNA replication intermediates. The C-terminus harbors a protease that specifically cleaves the polyproteins and releases the mature proteins. Required for the shutoff of minus-strand RNAs synthesis. Specifically inhibits the host IFN response by promoting the nuclear export of host STAT1. Also inhibits host transcription by inducing the rapid proteasome-dependent degradation of POLR2A, a catalytic subunit of the RNAPII complex. The resulting inhibition of cellular protein synthesis serves to ensure maximal viral gene expression and to evade host immune response. Functionally, seems to be essential for minus-strand RNAs and subgenomic 26S mRNAs synthesis. Displays mono-ADP-ribosylhydrolase activity. ADP-ribosylation is a post-translational modification that controls various processes of the host cell and the virus probably needs to revert it for optimal viral replication. Binds proteins of G3BP family and sequesters them into the viral RNA replication complexes thereby inhibiting the formation of host stress granules on viral mRNAs. The nsp3-G3BP complexes bind viral RNAs and probably orchestrate the assembly of viral replication complexes, thanks to the ability of G3BP family members to self-assemble and bind DNA. In terms of biological role, RNA dependent RNA polymerase. Replicates genomic and antigenomic RNA by recognizing replications specific signals. The early replication complex formed by the polyprotein P123 and nsP4 synthesizes minus-strand RNAs. The late replication complex composed of fully processed nsP1-nsP4 is responsible for the production of genomic and subgenomic plus-strand RNAs. The chain is Polyprotein P1234 from Anopheles (Human).